A 442-amino-acid polypeptide reads, in one-letter code: MSAAQGWDRNRRRGGGAAGAGGGGSGAGGGSGGSGGRGTGQLNRFVQLSGRPHLPGKKKIRWDPVRRRFIQSCPIIRIPNRFLRGHRPPPARSGHRCVADNTNLYVFGGYNPDYDESGGPDNEDYPLFRELWRYHFATGVWHQMGTDGYMPRELASMSLVLHGNNLLVFGGTGIPFGESNGNDVHVCNVKYKRWALLSCRGKKPSRIYGQAMAIINGSLYVFGGTTGYIYSTDLHKLDLNTREWTQLKPNNLSCDLPEERYRHEIAHDGQRIYILGGGTSWTAYSLNKIHAYNLETNAWEEIATKPHEKIGFPAARRCHSCVQIKNDVFICGGYNGEVILGDIWKLNLQTFQWVKLPATMPEPVYFHCAAVTPAGCMYIHGGVVNIHENKRTGSLFKIWLVVPSLLELAWEKLLAAFPNLANLSRTQLLHLGLTQGLIERLK.

The interval 1 to 57 (MSAAQGWDRNRRRGGGAAGAGGGGSGAGGGSGGSGGRGTGQLNRFVQLSGRPHLPGK) is disordered. Arginine 13 is subject to Omega-N-methylarginine. The segment covering 15–39 (GGAAGAGGGGSGAGGGSGGSGGRGT) has biased composition (gly residues). Kelch repeat units follow at residues 87–154 (RPPP…PREL), 155–198 (ASMS…ALLS), 199–260 (CRGK…PEER), 261–319 (YRHE…RRCH), 320–364 (SCVQ…PEPV), and 365–403 (YFHC…LVVP). The interaction with CUL2 stretch occupies residues 401–442 (VVPSLLELAWEKLLAAFPNLANLSRTQLLHLGLTQGLIERLK).

The protein belongs to the KLHDC10 family. In terms of assembly, component of a CRL2 E3 ubiquitin-protein ligase complex, also named ECS (Elongin BC-CUL2/5-SOCS-box protein) complex, composed of CUL2, Elongin BC (ELOB and ELOC), RBX1 and substrate-specific adapter KLHDC10. Interacts (via the 6 Kelch repeats) with PPP5C.

It localises to the nucleus. The protein localises to the cytoplasm. Its pathway is protein modification; protein ubiquitination. In terms of biological role, substrate-recognition component of a Cul2-RING (CRL2) E3 ubiquitin-protein ligase complex of the DesCEND (destruction via C-end degrons) pathway, which recognizes a C-degron located at the extreme C-terminus of target proteins, leading to their ubiquitination and degradation. The C-degron recognized by the DesCEND pathway is usually a motif of less than ten residues and can be present in full-length proteins, truncated proteins or proteolytically cleaved forms. The CRL2(KLHDC10) complex specifically recognizes proteins with a proline-glycine (Pro-Gly) or an alanine tail (CAT tail) at the C-terminus, leading to their ubiquitination and degradation. The CRL2(KLHDC10) complex is involved in the ribosome-associated quality control (RQC) pathway, which mediates the extraction of incompletely synthesized nascent chains from stalled ribosomes: CRL2(KLHDC10) acts downstream of NEMF and recognizes CAT tails associated with stalled nascent chains, leading to their ubiquitination and degradation. Participates in the oxidative stress-induced cell death through MAP3K5 activation. Inhibits PPP5C phosphatase activity on MAP3K5. Acts as a regulator of necroptosis. This Homo sapiens (Human) protein is Kelch domain-containing protein 10.